The primary structure comprises 440 residues: Ribosomal protein uS12 methylthiotransferase RimO (440 aa).

Residues Leu8–Asn125 enclose the MTTase N-terminal domain. Cys17, Cys52, Cys87, Cys152, Cys156, and Cys159 together coordinate [4Fe-4S] cluster. A Radical SAM core domain is found at Thr138–Lys368. In terms of domain architecture, TRAM spans Lys371–Ser439.

Belongs to the methylthiotransferase family. RimO subfamily. Requires [4Fe-4S] cluster as cofactor.

It localises to the cytoplasm. It carries out the reaction L-aspartate(89)-[ribosomal protein uS12]-hydrogen + (sulfur carrier)-SH + AH2 + 2 S-adenosyl-L-methionine = 3-methylsulfanyl-L-aspartate(89)-[ribosomal protein uS12]-hydrogen + (sulfur carrier)-H + 5'-deoxyadenosine + L-methionine + A + S-adenosyl-L-homocysteine + 2 H(+). Catalyzes the methylthiolation of an aspartic acid residue of ribosomal protein uS12. The polypeptide is Ribosomal protein uS12 methylthiotransferase RimO (Lawsonia intracellularis (strain PHE/MN1-00)).